Consider the following 220-residue polypeptide: Thymidylate kinase (220 aa).

10 to 17 (GIDGCGKS) serves as a coordination point for ATP.

This sequence belongs to the thymidylate kinase family.

It catalyses the reaction dTMP + ATP = dTDP + ADP. Phosphorylation of dTMP to form dTDP in both de novo and salvage pathways of dTTP synthesis. This is Thymidylate kinase from Prochlorococcus marinus (strain SARG / CCMP1375 / SS120).